The primary structure comprises 164 residues: Succinate dehydrogenase assembly factor 2, mitochondrial (164 aa).

The protein belongs to the SDHAF2 family. In terms of assembly, interacts with the flavoprotein subunit within the SDH catalytic dimer.

The protein resides in the mitochondrion matrix. In terms of biological role, plays an essential role in the assembly of succinate dehydrogenase (SDH), an enzyme complex (also referred to as respiratory complex II) that is a component of both the tricarboxylic acid (TCA) cycle and the mitochondrial electron transport chain, and which couples the oxidation of succinate to fumarate with the reduction of ubiquinone (coenzyme Q) to ubiquinol. Required for flavinylation (covalent attachment of FAD) of the flavoprotein subunit of the SDH catalytic dimer. The protein is Succinate dehydrogenase assembly factor 2, mitochondrial of Lodderomyces elongisporus (strain ATCC 11503 / CBS 2605 / JCM 1781 / NBRC 1676 / NRRL YB-4239) (Yeast).